Here is a 147-residue protein sequence, read N- to C-terminus: Mitochondrial import receptor subunit TOM20 homolog (147 aa).

At 1–3 (MVA) the chain is on the mitochondrial intermembrane side. A helical transmembrane segment spans residues 4-26 (VGKTSAIAAGVCGALLLGYCIYF). At 27–147 (DRKRRSDPNF…AQNLSEDDVE (121 aa)) the chain is on the cytoplasmic side.

It belongs to the Tom20 family. As to quaternary structure, forms part of the preprotein translocase complex of the outer mitochondrial membrane (TOM complex). Interacts with tom22.

It is found in the mitochondrion outer membrane. Central component of the receptor complex responsible for the recognition and translocation of cytosolically synthesized mitochondrial preproteins. Together with tom22 functions as the transit peptide receptor at the surface of the mitochondrion outer membrane and facilitates the movement of preproteins into the tom40 translocation pore. This chain is Mitochondrial import receptor subunit TOM20 homolog (tomm20), found in Xenopus laevis (African clawed frog).